The following is a 240-amino-acid chain: Sugar fermentation stimulation protein homolog (240 aa).

Belongs to the SfsA family.

This Crocosphaera subtropica (strain ATCC 51142 / BH68) (Cyanothece sp. (strain ATCC 51142)) protein is Sugar fermentation stimulation protein homolog.